The chain runs to 171 residues: CDP-archaeol synthase (171 aa).

4 helical membrane passes run 11–31 (VLYV…GLVF), 65–85 (VGLV…IGVI), 129–149 (LILV…IMLI), and 151–171 (LVLH…DVWY).

The protein belongs to the CDP-archaeol synthase family. The cofactor is Mg(2+).

It localises to the cell membrane. The enzyme catalyses 2,3-bis-O-(geranylgeranyl)-sn-glycerol 1-phosphate + CTP + H(+) = CDP-2,3-bis-O-(geranylgeranyl)-sn-glycerol + diphosphate. Its pathway is membrane lipid metabolism; glycerophospholipid metabolism. Catalyzes the formation of CDP-2,3-bis-(O-geranylgeranyl)-sn-glycerol (CDP-archaeol) from 2,3-bis-(O-geranylgeranyl)-sn-glycerol 1-phosphate (DGGGP) and CTP. This reaction is the third ether-bond-formation step in the biosynthesis of archaeal membrane lipids. The polypeptide is CDP-archaeol synthase (Methanothermobacter thermautotrophicus (strain ATCC 29096 / DSM 1053 / JCM 10044 / NBRC 100330 / Delta H) (Methanobacterium thermoautotrophicum)).